Here is a 500-residue protein sequence, read N- to C-terminus: Cysteine-rich secretory protein LCCL domain-containing 1 (500 aa).

The signal sequence occupies residues 1–23 (MKCTAREWLRVTTVLFMARAIPA). An SCP domain is found at 66-206 (LDLHNKLRSQ…PKAVYLVCNY (141 aa)). Over residues 254 to 280 (EETNEIERQQSQVHDTHVRTRSDDSSR) the composition is skewed to basic and acidic residues. Positions 254–281 (EETNEIERQQSQVHDTHVRTRSDDSSRN) are disordered. LCCL domains lie at 289–384 (MSQI…ANSF) and 390–492 (TVQA…PGGK). Disulfide bonds link cysteine 295–cysteine 313, cysteine 317–cysteine 337, cysteine 396–cysteine 418, and cysteine 422–cysteine 445.

It belongs to the CRISP family.

It is found in the secreted. This Homo sapiens (Human) protein is Cysteine-rich secretory protein LCCL domain-containing 1 (CRISPLD1).